The following is a 104-amino-acid chain: uncharacterized protein (104 aa).

This is an uncharacterized protein from Orgyia pseudotsugata (Douglas-fir tussock moth).